Reading from the N-terminus, the 529-residue chain is Bifunctional purine biosynthesis protein PurH (529 aa).

Positions 1 to 148 (MNNARPIRRA…KNHKDTTIIV (148 aa)) constitute an MGS-like domain.

This sequence belongs to the PurH family.

It carries out the reaction (6R)-10-formyltetrahydrofolate + 5-amino-1-(5-phospho-beta-D-ribosyl)imidazole-4-carboxamide = 5-formamido-1-(5-phospho-D-ribosyl)imidazole-4-carboxamide + (6S)-5,6,7,8-tetrahydrofolate. The catalysed reaction is IMP + H2O = 5-formamido-1-(5-phospho-D-ribosyl)imidazole-4-carboxamide. Its pathway is purine metabolism; IMP biosynthesis via de novo pathway; 5-formamido-1-(5-phospho-D-ribosyl)imidazole-4-carboxamide from 5-amino-1-(5-phospho-D-ribosyl)imidazole-4-carboxamide (10-formyl THF route): step 1/1. It functions in the pathway purine metabolism; IMP biosynthesis via de novo pathway; IMP from 5-formamido-1-(5-phospho-D-ribosyl)imidazole-4-carboxamide: step 1/1. The protein is Bifunctional purine biosynthesis protein PurH of Shewanella pealeana (strain ATCC 700345 / ANG-SQ1).